Consider the following 557-residue polypeptide: Urocanate hydratase (557 aa).

NAD(+) contacts are provided by residues 53–54, Gln-131, 177–179, Glu-197, Arg-202, 243–244, 264–268, 274–275, and Tyr-323; these read GG, GMG, NA, QTSAH, and YL. Cys-411 is an active-site residue. Gly-493 lines the NAD(+) pocket.

The protein belongs to the urocanase family. Requires NAD(+) as cofactor.

It localises to the cytoplasm. It catalyses the reaction 4-imidazolone-5-propanoate = trans-urocanate + H2O. It participates in amino-acid degradation; L-histidine degradation into L-glutamate; N-formimidoyl-L-glutamate from L-histidine: step 2/3. Catalyzes the conversion of urocanate to 4-imidazolone-5-propionate. This Pseudomonas entomophila (strain L48) protein is Urocanate hydratase.